The primary structure comprises 465 residues: Glutamate--tRNA ligase 2 (465 aa).

The 'HIGH' region signature appears at 8 to 18 (PSPTGLMHLGN). Residues 249–253 (PLSKR) carry the 'KMSKS' region motif. K252 contacts ATP.

This sequence belongs to the class-I aminoacyl-tRNA synthetase family. Glutamate--tRNA ligase type 1 subfamily. As to quaternary structure, monomer.

It localises to the cytoplasm. It catalyses the reaction tRNA(Glu) + L-glutamate + ATP = L-glutamyl-tRNA(Glu) + AMP + diphosphate. Functionally, catalyzes the attachment of glutamate to tRNA(Glu) in a two-step reaction: glutamate is first activated by ATP to form Glu-AMP and then transferred to the acceptor end of tRNA(Glu). The polypeptide is Glutamate--tRNA ligase 2 (Coxiella burnetii (strain RSA 331 / Henzerling II)).